The primary structure comprises 147 residues: F420H(2)-dependent reductase Rv1155 (147 aa).

Coenzyme F420-(gamma-Glu)n-binding positions include Gln32, Gln37, Ser50, 56-60, 77-79, and His138; these read AKTRN and WSY.

The protein belongs to the F420H(2)-dependent biliverdin reductase family. As to quaternary structure, homodimer.

Functionally, F420H(2)-dependent reductase able to catalyze the reduction of biliverdin-IXalpha to bilirubin-IXalpha in vitro. However, kinetic parameters show that it is less efficient than the biliverdin reductase Rv2074 and suggest biliverdin-IXalpha is unlikely to be the native substrate of Rv1155, which probably catalyzes the reduction of an alternative molecule in vivo. Binds coenzyme F420, but does not bind FMN or other flavins. Cannot use pyridoxine 5'-phosphate, pyridoxamine 5'-phosphate, pyridoxal 5'-phosphate (PLP), the anti-tuberculosis drug PA-824 or aflatoxin analogs as substrates. In Mycobacterium tuberculosis (strain ATCC 25618 / H37Rv), this protein is F420H(2)-dependent reductase Rv1155.